The sequence spans 1000 residues: C-module-binding factor A (1000 aa).

The 168-residue stretch at 113–280 folds into the JmjC domain; it reads PREWQEYLSH…ISYFSSLPHT (168 aa). A PHD-type; atypical zinc finger spans residues 489–544; sequence KIKCHRCEKRFKKFSIIFCTNCNARFCEQCVVNTFGQNFQVLMKRNEWECFCCKGL. The segment at 492-542 adopts an RING-type; degenerate zinc-finger fold; sequence CHRCEKRFKKFSIIFCTNCNARFCEQCVVNTFGQNFQVLMKRNEWECFCCK. Disordered regions lie at residues 561 to 647 and 660 to 818; these read RILN…SSYS and SYGS…KNLK. Low complexity-rich tracts occupy residues 574–647, 660–683, 700–710, 732–751, and 760–789; these read NNNN…SSYS, SYGS…NNNN, SSSSGSGSSNS, NNNN…NNHH, and NNNN…STST. The span at 805–818 shows a compositional bias: basic and acidic residues; that stretch reads DNDKPKGRPPKNLK. Positions 810–818 form a DNA-binding region, a.T hook; that stretch reads KGRPPKNLK.

In terms of assembly, monomer.

The protein localises to the nucleus. Transcriptional regulator involved in phagocytosis and pinocytosis. Both activates and represses transcription. Regulates expression of acaA, carA, pkaC, csaA, cotB and lagC. Promotes amplification of the tRNA gene-associated retrotransposon TRE5-A, a mobile genetic element formerly called as Dictyostelium repetitive element (DRE). Suppresses agnC and agnE encoding argonaute proteins which are part of a RNA interference pathway controlling TRE5-A amplification. Required for amplification of both sense and antisense RNA transcripts, but does not activate their promoters found in A-module and C-module of the TRE5-A, respectively. Nevertheless, binds to distinct DNA sequences containing A and T stretches within the C-module in vitro. The polypeptide is C-module-binding factor A (Dictyostelium discoideum (Social amoeba)).